The primary structure comprises 263 residues: MEIWYAEIINIGNEILTGRTINTNASHIARRLTSLGYTVRRITVVRDEIEEIVSAFREAINRRPRIIISTGGLGPTYDDKTNEGLAKALNIELELNEIAYKMLLEKYSKLNIEITEERKKMAIMPKGSIPVENNAGVAPGILIVYQGITILATPGVPKEMEDVLENFIKKYLKDRPSVKYLETSFLLEGVMESTIAPYVKQLVKKYDLYIKTHPKGQELSKPILEIQIAGSSENEAEIKERIQKALEELKEIGVKLGGTIIQS.

The protein belongs to the CinA family.

The sequence is that of Protein STK_14130 from Sulfurisphaera tokodaii (strain DSM 16993 / JCM 10545 / NBRC 100140 / 7) (Sulfolobus tokodaii).